The primary structure comprises 284 residues: RNase adapter protein RapZ (284 aa).

Residue 8–15 participates in ATP binding; it reads GRSGSGKS. 56–59 lines the GTP pocket; it reads DVRN. Residues 266–284 are RNA-binding; it reads RSRGKNVQSRHRTLEKRKT.

Belongs to the RapZ-like family. RapZ subfamily. In terms of assembly, homotrimer.

Its function is as follows. Modulates the synthesis of GlmS, by affecting the processing and stability of the regulatory small RNA GlmZ. When glucosamine-6-phosphate (GlcN6P) concentrations are high in the cell, RapZ binds GlmZ and targets it to cleavage by RNase E. Consequently, GlmZ is inactivated and unable to activate GlmS synthesis. Under low GlcN6P concentrations, RapZ is sequestered and inactivated by an other regulatory small RNA, GlmY, preventing GlmZ degradation and leading to synthesis of GlmS. The sequence is that of RNase adapter protein RapZ from Citrobacter koseri (strain ATCC BAA-895 / CDC 4225-83 / SGSC4696).